The following is a 322-amino-acid chain: Heterogeneous nuclear ribonucleoprotein D-like (322 aa).

The interval 1–36 (MTGTARSALPLPQSPARALRPSGAARAAPSLSPSRF) is disordered. Arg6 bears the Omega-N-methylarginine mark. Over residues 14-36 (SPARALRPSGAARAAPSLSPSRF) the composition is skewed to low complexity. RRM domains lie at 51–133 (NKMF…KGKE) and 136–215 (KKVF…QPKE). At Lys64 the chain carries N6-methyllysine. A Glycyl lysine isopeptide (Lys-Gly) (interchain with G-Cter in SUMO2) cross-link involves residue Lys112. Lys119 is subject to N6-acetyllysine. Phosphoserine is present on Ser144. Disordered regions lie at residues 216–251 (VYRQ…NWNQ) and 299–322 (SGQQ…YQPY). The segment covering 226–245 (GGRGAAAGGRGGARGRGRGQ) has biased composition (gly residues). The segment at 245-322 (QGQNWNQGFN…GNHQNNYQPY (78 aa)) is necessary for interaction with TNPO1. The residue at position 310 (Arg310) is a Dimethylated arginine; alternate. At Arg310 the chain carries Omega-N-methylarginine; alternate.

As to quaternary structure, interacts with TNPO1 and ZNF148. Post-translationally, dimethylation of Arg-310 is probably of the asymmetric type.

It is found in the nucleus. It localises to the cytoplasm. Its function is as follows. Acts as a transcriptional regulator. Promotes transcription repression. Promotes transcription activation in differentiated myotubes. Binds to double- and single-stranded DNA sequences. Binds to the transcription suppressor CATR sequence of the COX5B promoter. Binds with high affinity to RNA molecules that contain AU-rich elements (AREs) found within the 3'-UTR of many proto-oncogenes and cytokine mRNAs. Binds both to nuclear and cytoplasmic poly(A) mRNAs. Binds to poly(G) and poly(A), but not to poly(U) or poly(C) RNA homopolymers. Binds to the 5'-ACUAGC-3' RNA consensus sequence. The polypeptide is Heterogeneous nuclear ribonucleoprotein D-like (Hnrnpdl) (Rattus norvegicus (Rat)).